The following is a 289-amino-acid chain: Nucleotide-binding protein Franean1_2060 (289 aa).

13-20 is a binding site for ATP; the sequence is GLSGAGRS. Residue 64–67 coordinates GTP; sequence DVRG.

It belongs to the RapZ-like family.

Its function is as follows. Displays ATPase and GTPase activities. This chain is Nucleotide-binding protein Franean1_2060, found in Parafrankia sp. (strain EAN1pec).